A 52-amino-acid polypeptide reads, in one-letter code: Small, acid-soluble spore protein K (52 aa).

Residues 1 to 52 are disordered; sequence MGKQAEFWSESKNNSKIDGQPKAKSRFASKRPNGTINTHPQERMRAANQQEE.

It belongs to the SspK family.

It is found in the spore core. This chain is Small, acid-soluble spore protein K, found in Bacillus anthracis (strain A0248).